A 167-amino-acid polypeptide reads, in one-letter code: Small ribosomal subunit protein uS5 (167 aa).

Residues L12–V75 form the S5 DRBM domain.

This sequence belongs to the universal ribosomal protein uS5 family. Part of the 30S ribosomal subunit. Contacts proteins S4 and S8.

Functionally, with S4 and S12 plays an important role in translational accuracy. Located at the back of the 30S subunit body where it stabilizes the conformation of the head with respect to the body. This Levilactobacillus brevis (strain ATCC 367 / BCRC 12310 / CIP 105137 / JCM 1170 / LMG 11437 / NCIMB 947 / NCTC 947) (Lactobacillus brevis) protein is Small ribosomal subunit protein uS5.